The primary structure comprises 435 residues: uncharacterized protein (435 aa).

12 helical membrane-spanning segments follow: residues L26 to P46, I61 to L81, I96 to F116, L119 to F139, L150 to V170, V177 to Y197, V242 to W262, F281 to V301, F325 to I345, I347 to A367, L385 to F405, and L407 to L427.

The protein belongs to the major facilitator superfamily. Phthalate permease family.

It localises to the cell membrane. This is an uncharacterized protein from Bacillus subtilis (strain 168).